Reading from the N-terminus, the 405-residue chain is Acetylornithine/succinyldiaminopimelate aminotransferase (405 aa).

Pyridoxal 5'-phosphate contacts are provided by residues 108–109 (GT) and Phe-141. Residue Arg-144 coordinates N(2)-acetyl-L-ornithine. Residue 226-229 (DEVQ) coordinates pyridoxal 5'-phosphate. Lys-255 bears the N6-(pyridoxal phosphate)lysine mark. N(2)-acetyl-L-ornithine is bound at residue Ser-283. Residue Thr-284 coordinates pyridoxal 5'-phosphate.

It belongs to the class-III pyridoxal-phosphate-dependent aminotransferase family. ArgD subfamily. In terms of assembly, homodimer. Pyridoxal 5'-phosphate is required as a cofactor.

The protein localises to the cytoplasm. It catalyses the reaction N(2)-acetyl-L-ornithine + 2-oxoglutarate = N-acetyl-L-glutamate 5-semialdehyde + L-glutamate. It carries out the reaction N-succinyl-(2S,6S)-2,6-diaminopimelate + 2-oxoglutarate = (S)-2-succinylamino-6-oxoheptanedioate + L-glutamate. It functions in the pathway amino-acid biosynthesis; L-arginine biosynthesis; N(2)-acetyl-L-ornithine from L-glutamate: step 4/4. The protein operates within amino-acid biosynthesis; L-lysine biosynthesis via DAP pathway; LL-2,6-diaminopimelate from (S)-tetrahydrodipicolinate (succinylase route): step 2/3. Functionally, involved in both the arginine and lysine biosynthetic pathways. The polypeptide is Acetylornithine/succinyldiaminopimelate aminotransferase (Salmonella typhi).